Here is a 303-residue protein sequence, read N- to C-terminus: N-acetyl-D-glucosamine kinase (303 aa).

ATP contacts are provided by residues 4-11 (GFDIGGTK) and 133-140 (GVGGGLVL). Zn(2+)-binding residues include His157, Cys177, Cys179, and Cys184.

Belongs to the ROK (NagC/XylR) family. NagK subfamily.

The enzyme catalyses N-acetyl-D-glucosamine + ATP = N-acetyl-D-glucosamine 6-phosphate + ADP + H(+). Its pathway is cell wall biogenesis; peptidoglycan recycling. In terms of biological role, catalyzes the phosphorylation of N-acetyl-D-glucosamine (GlcNAc) derived from cell-wall degradation, yielding GlcNAc-6-P. This is N-acetyl-D-glucosamine kinase from Salmonella paratyphi A (strain ATCC 9150 / SARB42).